Consider the following 2892-residue polypeptide: E3 ubiquitin-protein ligase lubel (2892 aa).

Disordered stretches follow at residues 23-55 (DRIGPKPPPTPPNGVAGGLPKAPALPPKAKSTP), 125-252 (KQHM…QLEK), 395-423 (SQQHPGWAQHPHQALPQHQHPDQWSQFGS), 483-631 (PSAA…ESEG), 644-672 (QKLQEADQHKSSKKAEPKRKPEMKDENTQ), 685-737 (AHEE…PDHE), 757-865 (CCKT…DNSL), and 949-975 (DRFTTPEPNKMERRPHYRSNSQLQQES). Residues 40 to 52 (GLPKAPALPPKAK) show a composition bias toward low complexity. Over residues 189-198 (GWRGSLGGGA) the composition is skewed to gly residues. Over residues 206–215 (ATSSANQMNN) the composition is skewed to polar residues. 2 stretches are compositionally biased toward low complexity: residues 402-412 (AQHPHQALPQH) and 483-503 (PSAASRAASRSRYAASPTPSR). Residues 516-528 (VDDELTDDEDSDQ) show a composition bias toward acidic residues. Residues 535–546 (VSNRSGMTSASR) are compositionally biased toward polar residues. Positions 547 to 560 (SQHHQNHIQPRQRR) are enriched in basic residues. The segment covering 606–623 (GTLTRNKTATDSARTSRI) has biased composition (polar residues). Residues 647-670 (QEADQHKSSKKAEPKRKPEMKDEN) show a composition bias toward basic and acidic residues. A compositionally biased stretch (polar residues) spans 801 to 813 (KPTTKSQQPSQKS). 2 stretches are compositionally biased toward low complexity: residues 818-837 (SKTTHTNSTSSSKASPAVNS) and 846-856 (KTPSKSTLKTS). The UBA-like 1 domain maps to 1042-1187 (MHIILKELEL…LMRIWGSPNG (146 aa)). Disordered stretches follow at residues 1214 to 1252 (LQPPLAGQSPSPAQANPFDQPRTDESPVKSTYATPSPYQ), 1477 to 1520 (LPTA…KLET), 1557 to 1653 (AEVQ…KILS), 1717 to 2019 (STTI…NLSE), 2032 to 2082 (RDEI…EGNT), 2191 to 2316 (SAPP…PLRS), and 2411 to 2431 (DYETSATEEEQEEPNLAEPQK). The segment covering 1241-1252 (VKSTYATPSPYQ) has biased composition (polar residues). Positions 1510–1519 (EELRQQEKLE) are enriched in basic and acidic residues. Residues 1560–1571 (QVQSDDQPSTSR) are compositionally biased toward polar residues. Basic residues predominate over residues 1576–1587 (RAKRSQQSRKGR). Residues 1595–1607 (PTNRTKLPNNIDQ) are compositionally biased toward polar residues. The segment covering 1608–1627 (KVNESKTAAKETEAVKDKDL) has biased composition (basic and acidic residues). Composition is skewed to polar residues over residues 1630–1653 (AASNIQSDVTASDPKTSTPLKILS), 1717–1726 (STTISEQSEG), and 1764–1779 (KSPTSQEVNIQDTSHI). Residues 1822–1834 (LSSSSLRSESRSS) are compositionally biased toward low complexity. The span at 1859–1881 (TVSSPKSEQLSDNQEVNLVSQET) shows a compositional bias: polar residues. The segment covering 1918–1927 (DSDEVFEDAP) has biased composition (acidic residues). Residues 1953–1963 (DGQRAETKSPE) are compositionally biased toward basic and acidic residues. Acidic residues-rich tracts occupy residues 1964 to 1975 (DEVVILLDEESQ) and 2036 to 2079 (SMDE…DGEE). Composition is skewed to low complexity over residues 2214 to 2230 (PSEVEPTPVEEPTALPI) and 2269 to 2291 (SGTASKGPSTSSSTKTNKSTVSK). Over residues 2297–2308 (NEPTNKSNSTPL) the composition is skewed to polar residues. A compositionally biased stretch (acidic residues) spans 2411–2425 (DYETSATEEEQEEPN). Residues 2457–2513 (DPAILARKYVDQELVTNIAEAQIAATLVSMKFSEDVALWAARECSDLDQAIAMLQQE) enclose the UBA-like 2 domain. The TRIAD supradomain stretch occupies residues 2510 to 2748 (LQQECELCMN…LGLHAHHPRN (239 aa)). Zn(2+) contacts are provided by Cys-2514, Cys-2517, Cys-2537, Cys-2540, Cys-2618, Cys-2621, Cys-2636, Cys-2639, Cys-2644, Cys-2647, His-2655, Cys-2660, Cys-2690, and Cys-2693. The RING-type 1 zinc-finger motif lies at 2514–2564 (CELCMNSYPMNQMVSMLKCLHKCCKQCAKSYFTVQITDRSINDCSCPFCKL). Positions 2514-2892 (CELCMNSYPM…IKKHIPLKSA (379 aa)) are necessary for linear polyubiquitination and sufficent for inducing DptA in the intestine. The IBR-type zinc-finger motif lies at 2601-2660 (QRKLRDRSLLQDPNFKWCIQCSSGFFARPKQKRLICPDCGSVTCAQCRKPWERQHEGSSC). The RING-type 2; atypical zinc-finger motif lies at 2690 to 2720 (CPKCKFRYSLARGGCMHFTCTQCKFEFCYGC). Residue Cys-2704 is part of the active site. Positions 2709 and 2712 each coordinate Zn(2+).

It belongs to the RBR family.

The enzyme catalyses [E2 ubiquitin-conjugating enzyme]-S-ubiquitinyl-L-cysteine + [acceptor protein]-L-lysine = [E2 ubiquitin-conjugating enzyme]-L-cysteine + [acceptor protein]-N(6)-ubiquitinyl-L-lysine.. Functionally, E3 ubiquitin-protein ligase which conjugates linear 'Met-1'- and 'Lys-63'-linked polyubiquitin chains to substrates and plays a crucial role in the NF-kappa-B intestinal inflammatory response to oral infection and in the heat stress response. Preferentially interacts with 'Lys-63'-linked, and to a lesser extent 'Lys-48'-linked, polyubiquitin chains. Upon oral infection with a Gram-negative bacterium E.carotovora subsp. carotovora 15, functions with the E2 ubiquitin-conjugating enzyme Ubc10 to mediate the conjugation of 'Lys-63'- and linear 'Met-1'-linked polyubiquitin chains to the substrate key which is essential for activation of the NF-kappa-B signaling cascade in the adult intestinal epithelium. It is not required for systemic immune response to septic infection with either E.carotovora subsp. carotovora 15 or Gram-positive M.luteus bacteria. Function in controlling linear ubiquitination is also essential for regulating the heat stress response in adults. This function may require the E2 ubiquitin-conjugating enzymes Ubc10 or eff. In Drosophila melanogaster (Fruit fly), this protein is E3 ubiquitin-protein ligase lubel.